A 370-amino-acid polypeptide reads, in one-letter code: Histidinol-phosphate aminotransferase 3 (370 aa).

Lys-233 carries the N6-(pyridoxal phosphate)lysine modification.

This sequence belongs to the class-II pyridoxal-phosphate-dependent aminotransferase family. Histidinol-phosphate aminotransferase subfamily. As to quaternary structure, homodimer. It depends on pyridoxal 5'-phosphate as a cofactor.

The catalysed reaction is L-histidinol phosphate + 2-oxoglutarate = 3-(imidazol-4-yl)-2-oxopropyl phosphate + L-glutamate. It functions in the pathway amino-acid biosynthesis; L-histidine biosynthesis; L-histidine from 5-phospho-alpha-D-ribose 1-diphosphate: step 7/9. In Burkholderia lata (strain ATCC 17760 / DSM 23089 / LMG 22485 / NCIMB 9086 / R18194 / 383), this protein is Histidinol-phosphate aminotransferase 3.